The chain runs to 155 residues: MASSSSSSHRRLILAAAVLLSVLAAASASAGTSCVPGWAIPHNPLPSCRWYVTSRTCGIGPRLPWPELKRRCCRELADIPAYCRCTALSILMDGAIPPGPDAQLEGRLEDLPGCPREVQRGFAATLVTEAECNLATISGVAECPWILGGGTMPSK.

Residues 1-28 (MASSSSSSHRRLILAAAVLLSVLAAASA) form the signal peptide. 5 cysteine pairs are disulfide-bonded: Cys34/Cys83, Cys48/Cys72, Cys57/Cys114, Cys73/Cys132, and Cys85/Cys143. Arg62 is a catalytic residue. Residues 139 to 155 (GVAECPWILGGGTMPSK) constitute a propeptide, C-terminal peptide.

It belongs to the protease inhibitor I6 (cereal trypsin/alpha-amylase inhibitor) family. In terms of assembly, monomer.

It is found in the secreted. Its function is as follows. Potent inhibitor of mammalian trypsin and a specific inhibitor of factor XIIa (activated hageman factor). The polypeptide is Trypsin/factor XIIA inhibitor (Zea mays (Maize)).